The following is a 183-amino-acid chain: Endoribonuclease YbeY (183 aa).

Residues His-118, His-122, and His-128 each coordinate Zn(2+). The segment at 156–183 is disordered; the sequence is EREQAQRSADSAVLGAVGLEEQDGPGTH.

The protein belongs to the endoribonuclease YbeY family. Zn(2+) is required as a cofactor.

Its subcellular location is the cytoplasm. Single strand-specific metallo-endoribonuclease involved in late-stage 70S ribosome quality control and in maturation of the 3' terminus of the 16S rRNA. This chain is Endoribonuclease YbeY, found in Saccharopolyspora erythraea (strain ATCC 11635 / DSM 40517 / JCM 4748 / NBRC 13426 / NCIMB 8594 / NRRL 2338).